The primary structure comprises 83 residues: Mitochondrial import inner membrane translocase subunit Tim8 B (83 aa).

An N-acetylalanine modification is found at Ala-2. Residues 36–59 (CWDKCVEKPGNRLDSRTENCLSSC) carry the Twin CX3C motif motif. 2 cysteine pairs are disulfide-bonded: Cys-36-Cys-59 and Cys-40-Cys-55.

This sequence belongs to the small Tim family. In terms of assembly, heterohexamer; possibly composed of 3 copies of TIMM8B and 3 copies of TIMM13, named soluble 70 kDa complex. Associates with the TIM22 complex, whose core is composed of TIMM22. As to expression, ubiquitous, with highest expression in heart, kidney, liver and skeletal muscle.

It localises to the mitochondrion inner membrane. Probable mitochondrial intermembrane chaperone that participates in the import and insertion of some multi-pass transmembrane proteins into the mitochondrial inner membrane. Also required for the transfer of beta-barrel precursors from the TOM complex to the sorting and assembly machinery (SAM complex) of the outer membrane. Acts as a chaperone-like protein that protects the hydrophobic precursors from aggregation and guide them through the mitochondrial intermembrane space. This chain is Mitochondrial import inner membrane translocase subunit Tim8 B (TIMM8B), found in Homo sapiens (Human).